A 172-amino-acid chain; its full sequence is Large ribosomal subunit protein uL10 (172 aa).

The protein belongs to the universal ribosomal protein uL10 family. Part of the ribosomal stalk of the 50S ribosomal subunit. The N-terminus interacts with L11 and the large rRNA to form the base of the stalk. The C-terminus forms an elongated spine to which L12 dimers bind in a sequential fashion forming a multimeric L10(L12)X complex.

Forms part of the ribosomal stalk, playing a central role in the interaction of the ribosome with GTP-bound translation factors. This Methylorubrum extorquens (strain CM4 / NCIMB 13688) (Methylobacterium extorquens) protein is Large ribosomal subunit protein uL10.